A 169-amino-acid polypeptide reads, in one-letter code: Ferric-chelate reductase (NAD(P)H) (169 aa).

Tyr7 serves as a coordination point for NADP(+). FMN-binding positions include 27–31 (QIANT), 45–52 (CLNKENDT), 82–84 (RKS), and Lys89. Residues His126 and 147-154 (YADYHLMK) each bind NADP(+).

It belongs to the non-flavoprotein flavin reductase family. In terms of assembly, homodimer. FMN serves as cofactor. It depends on FAD as a cofactor.

It carries out the reaction 2 a Fe(II)-siderophore + NAD(+) + H(+) = 2 a Fe(III)-siderophore + NADH. The catalysed reaction is 2 a Fe(II)-siderophore + NADP(+) + H(+) = 2 a Fe(III)-siderophore + NADPH. Catalyzes the reduction of bound ferric iron (Fe(3+)) in a variety of iron chelators (siderophores) using NAD(P)H as the electron donor, resulting in the release of Fe(2+). Not active with uncomplexed Fe(3+). Also reduces FMN and FAD, but not riboflavin. The polypeptide is Ferric-chelate reductase (NAD(P)H) (Archaeoglobus fulgidus (strain ATCC 49558 / DSM 4304 / JCM 9628 / NBRC 100126 / VC-16)).